The sequence spans 983 residues: Protein translocase subunit SecA (983 aa).

Residues Q83, 101-105 (GEGKT), and D489 each bind ATP. A disordered region spans residues 948-983 (ISSEEENNNEKTNININEDLERTKGEAQQTAKNPNE). Residues 973-983 (EAQQTAKNPNE) show a composition bias toward polar residues.

Belongs to the SecA family. As to quaternary structure, monomer and homodimer. Part of the essential Sec protein translocation apparatus which comprises SecA, SecYEG and auxiliary proteins SecDF. Other proteins may also be involved.

It localises to the cell membrane. Its subcellular location is the cytoplasm. The catalysed reaction is ATP + H2O + cellular proteinSide 1 = ADP + phosphate + cellular proteinSide 2.. Functionally, part of the Sec protein translocase complex. Interacts with the SecYEG preprotein conducting channel. Has a central role in coupling the hydrolysis of ATP to the transfer of proteins into and across the cell membrane, serving as an ATP-driven molecular motor driving the stepwise translocation of polypeptide chains across the membrane. The sequence is that of Protein translocase subunit SecA from Mesomycoplasma hyopneumoniae (strain 7448) (Mycoplasma hyopneumoniae).